The following is a 95-amino-acid chain: Homeotic protein bicoid (95 aa).

2 disordered regions span residues 1-29 and 42-63; these read NLEP…STGM and GKPS…MMHD.

The protein belongs to the paired homeobox family. Bicoid subfamily.

Its subcellular location is the nucleus. Its function is as follows. Bicoid is polarity protein that provides positional cues for the development of head and thoracic segments. BCD regulates the expression of zygotic genes, possibly through its homeodomain, and inhibits the activity of other maternal gene products. This Drosophila subobscura (Fruit fly) protein is Homeotic protein bicoid (bcd).